A 362-amino-acid chain; its full sequence is UDP-arabinopyranose mutase 3 (362 aa).

The short motif at 106 to 108 is the DXD motif element; the sequence is DDD. An N-linked (Glc...) arginine glycan is attached at arginine 154.

The protein belongs to the RGP family. As to quaternary structure, heterodimer with RGP1. Mn(2+) is required as a cofactor. The cofactor is Mg(2+). In terms of processing, reversibly glycosylated in vitro by UDP-glucose, UDP-xylose and UDP-galactose, but not UDP-mannose. Specifically expressed in developing seeds.

Its subcellular location is the cytoplasm. The protein localises to the cytosol. It localises to the golgi apparatus. It catalyses the reaction UDP-beta-L-arabinofuranose = UDP-beta-L-arabinopyranose. Functionally, UDP-L-arabinose mutase involved in the biosynthesis of cell wall non-cellulosic polysaccharides. Catalyzes the interconvertion of UDP-L-arabinopyranose (UDP-Arap) and UDP-L-arabinofuranose (UDP-Araf). Preferentially catalyzes the formation of UDP-Arap from UDP-Araf. At thermodynamic equilibrium in vitro the ratio of the pyranose form over the furanose form is 95:5. Is not active on other UDP-sugars (UDP-Gal, UDP-Xyl, UDP-Glc, GDP-Man and GDP-Fuc). Is probably active as heteromer in vivo. The polypeptide is UDP-arabinopyranose mutase 3 (Arabidopsis thaliana (Mouse-ear cress)).